Consider the following 119-residue polypeptide: Myohemerythrin-1 (119 aa).

Residues H25, H55, N58, E59, H74, H78, H107, and D112 each coordinate Fe cation.

This sequence belongs to the hemerythrin family. As to quaternary structure, monomer. In terms of tissue distribution, muscle.

Functionally, myohemerythrin is an oxygen-binding protein found in the retractor muscles of certain worms. The oxygen-binding site contains two iron atoms. The polypeptide is Myohemerythrin-1 (Phascolopsis gouldii (Peanut worm)).